The sequence spans 117 residues: MLKFKNMYITSHDNFIAYIFFTFFTFIPFYRSDQSTLCRCSQKIFLSGQRLLRQTVIIVGPLAPFSSYSSPFFFIPLFFSGPNSIPFQDYRCSPWCPSRSHGAVLPSYCSLRWSHRT.

The next 2 membrane-spanning stretches (helical) occupy residues 9–29 and 56–76; these read ITSH…FIPF and VIIV…FFIP.

Its subcellular location is the membrane. This is an uncharacterized protein from Saccharomyces cerevisiae (strain ATCC 204508 / S288c) (Baker's yeast).